The sequence spans 923 residues: Protocadherin gamma-B5 (923 aa).

Positions 1–30 (MGRGTGELGRAERLPVLFLFLLSLFCPALC) are cleaved as a signal peptide. 6 consecutive Cadherin domains span residues 31–133 (EQIR…TPKF), 134–242 (TQNS…PPVF), 243–343 (NRDV…SPEV), 344–448 (TFHS…APVF), 449–558 (HQAS…APRV), and 566–671 (DGSA…LPDI). Residues 31-687 (EQIRYRIPEE…SDPQAELQFY (657 aa)) lie on the Extracellular side of the membrane. Asn415 and Asn541 each carry an N-linked (GlcNAc...) asparagine glycan. The chain crosses the membrane as a helical span at residues 688-708 (LVVALALISVLFLLAVILAIA). Residues 709–923 (LRLRRSSSPA…KKKSGKKEKK (215 aa)) are Cytoplasmic-facing. Disordered regions lie at residues 794–832 (TSHP…WPNN) and 893–923 (ATLT…KEKK). Positions 807 to 832 (WRFSQAQRPGTSGSQNGDDTGTWPNN) are enriched in polar residues. The segment covering 913 to 923 (NKKKSGKKEKK) has biased composition (basic residues).

It localises to the cell membrane. Potential calcium-dependent cell-adhesion protein. May be involved in the establishment and maintenance of specific neuronal connections in the brain. This is Protocadherin gamma-B5 (PCDHGB5) from Pan troglodytes (Chimpanzee).